The sequence spans 314 residues: Small ribosomal subunit biogenesis GTPase RsgA (314 aa).

The segment at 1 to 21 (MKRAPTKQPAKPAARGGERAQ) is disordered. The CP-type G domain maps to 85-246 (SDQFKSKLFA…LIDSPGFQEF (162 aa)). Residues 134 to 137 (NKID) and 188 to 196 (GQSGMGKST) contribute to the GTP site. Residues cysteine 270, cysteine 275, histidine 277, and cysteine 283 each contribute to the Zn(2+) site.

Belongs to the TRAFAC class YlqF/YawG GTPase family. RsgA subfamily. Monomer. Associates with 30S ribosomal subunit, binds 16S rRNA. Zn(2+) serves as cofactor.

It localises to the cytoplasm. Functionally, one of several proteins that assist in the late maturation steps of the functional core of the 30S ribosomal subunit. Helps release RbfA from mature subunits. May play a role in the assembly of ribosomal proteins into the subunit. Circularly permuted GTPase that catalyzes slow GTP hydrolysis, GTPase activity is stimulated by the 30S ribosomal subunit. This Burkholderia pseudomallei (strain 1106a) protein is Small ribosomal subunit biogenesis GTPase RsgA.